Consider the following 550-residue polypeptide: MKALRRSYTSTSSGNSSSSSSLPSSSSSSLPSSSSSSPPSSNSNSYSNSNSSSSSSSWIHLRSVLFVANLSSPSSVTSSDRRRKSPWSRRKRKWALTPHQWRSLFTPEGKLRDGGVGFLKKVRSRGVDPSIRAEVWLFLLGVYDLNSTSEEREAVKTQKRKEYEKLQRRCQMLLKCGNGSTDNLEELPSDEANSQCVRFVDDYKITGPMTSQDVVSALNTDSSDTDSCEDNEDVLLLSSFAHSDEKKPEEDNSNNNSEENSSLLVAAASEVQVEVAVHEDFSTWQRIIRLDALRADSEWANYSPYSTAITESKARRLAESVGLKDYDHLESCRLYHAARLVAILEAYAMYDPEIGYCQGMSDLLSPILAVISEDHEAFWCFVGFMKKARHNFRLDEAGIQRQLSIVSKIIKNKDSQLYKHLENLQAEDCSFVYRMVLVMFRRELSFEQTLCLWEVMWADQAAIRAGVGKSPWSRIRQQAPPTDDLLLYAIAALVLRRKLIIQKYSSMDEIVEECNSMAGQLNVWKLLDDAHHLVVTLHDKIETLSQSQSI.

A disordered region spans residues 1 to 49 (MKALRRSYTSTSSGNSSSSSSLPSSSSSSLPSSSSSSPPSSNSNSYSNS). A compositionally biased stretch (low complexity) spans 7 to 49 (SYTSTSSGNSSSSSSLPSSSSSSLPSSSSSSPPSSNSNSYSNS). The Rab-GAP TBC domain maps to 126–460 (GVDPSIRAEV…CLWEVMWADQ (335 aa)).

Interacts with AGT1 in peroxisome under biotic stress conditions. Expressed in root meristems, vascular tissues, guard cells, trichomes, styles and receptacles.

It is found in the nucleus. The protein resides in the peroxisome. Involved in defense response against fungal and bacterial pathogens. Acts as a negative regulator of jasmonate (JA) responses during infection by the soil-born fungal pathogen Verticillium longisporum. Involved in abscisic acid-dependent stomata closure in response to infection by V.longisporum and Pseudomonas syringae. May be a downstream component of brassinosteroid-mediated signaling. The sequence is that of Rab GTPase-activating protein 22 from Arabidopsis thaliana (Mouse-ear cress).